The chain runs to 66 residues: Large ribosomal subunit protein bL35 (66 aa).

Residues 1 to 16 (MPKQKTHRASAKRFKR) are compositionally biased toward basic residues. Residues 1 to 21 (MPKQKTHRASAKRFKRTGSGG) are disordered.

It belongs to the bacterial ribosomal protein bL35 family.

In Streptococcus mutans serotype c (strain ATCC 700610 / UA159), this protein is Large ribosomal subunit protein bL35.